The sequence spans 61 residues: Large ribosomal subunit protein uL29 (61 aa).

Belongs to the universal ribosomal protein uL29 family.

The protein is Large ribosomal subunit protein uL29 of Campylobacter lari (strain RM2100 / D67 / ATCC BAA-1060).